The primary structure comprises 181 residues: Protein GrpE (181 aa).

The segment covering 1–13 has biased composition (polar residues); that stretch reads MENTQENPATQSA. A disordered region spans residues 1–39; it reads MENTQENPATQSAEDIGSEKQAAQGAAPAAEAADAALAE. The segment covering 21–39 has biased composition (low complexity); it reads QAAQGAAPAAEAADAALAE.

Belongs to the GrpE family. As to quaternary structure, homodimer.

Its subcellular location is the cytoplasm. In terms of biological role, participates actively in the response to hyperosmotic and heat shock by preventing the aggregation of stress-denatured proteins, in association with DnaK and GrpE. It is the nucleotide exchange factor for DnaK and may function as a thermosensor. Unfolded proteins bind initially to DnaJ; upon interaction with the DnaJ-bound protein, DnaK hydrolyzes its bound ATP, resulting in the formation of a stable complex. GrpE releases ADP from DnaK; ATP binding to DnaK triggers the release of the substrate protein, thus completing the reaction cycle. Several rounds of ATP-dependent interactions between DnaJ, DnaK and GrpE are required for fully efficient folding. This chain is Protein GrpE, found in Burkholderia lata (strain ATCC 17760 / DSM 23089 / LMG 22485 / NCIMB 9086 / R18194 / 383).